Reading from the N-terminus, the 441-residue chain is tRNA-2-methylthio-N(6)-dimethylallyladenosine synthase (441 aa).

One can recognise an MTTase N-terminal domain in the interval lysine 3 to glutamine 119. [4Fe-4S] cluster-binding residues include cysteine 12, cysteine 48, cysteine 82, cysteine 155, cysteine 159, and cysteine 162. The region spanning arginine 141–glutamate 371 is the Radical SAM core domain. The 64-residue stretch at glycine 374–aspartate 437 folds into the TRAM domain.

The protein belongs to the methylthiotransferase family. MiaB subfamily. As to quaternary structure, monomer. The cofactor is [4Fe-4S] cluster.

It localises to the cytoplasm. It catalyses the reaction N(6)-dimethylallyladenosine(37) in tRNA + (sulfur carrier)-SH + AH2 + 2 S-adenosyl-L-methionine = 2-methylsulfanyl-N(6)-dimethylallyladenosine(37) in tRNA + (sulfur carrier)-H + 5'-deoxyadenosine + L-methionine + A + S-adenosyl-L-homocysteine + 2 H(+). In terms of biological role, catalyzes the methylthiolation of N6-(dimethylallyl)adenosine (i(6)A), leading to the formation of 2-methylthio-N6-(dimethylallyl)adenosine (ms(2)i(6)A) at position 37 in tRNAs that read codons beginning with uridine. This is tRNA-2-methylthio-N(6)-dimethylallyladenosine synthase from Prosthecochloris aestuarii (strain DSM 271 / SK 413).